A 410-amino-acid polypeptide reads, in one-letter code: 2-epi-5-epi-valiolone synthase (410 aa).

NAD(+) contacts are provided by residues aspartate 66, 97-100 (ETLK), 130-134 (GVLMD), 154-155 (TT), lysine 167, lysine 176, and 194-197 (FLAT). Lysine 167 is an active-site residue. Positions 209, 280, and 296 each coordinate a divalent metal cation.

This sequence belongs to the sugar phosphate cyclases superfamily. EEVS family. NAD(+) is required as a cofactor. Co(2+) serves as cofactor.

It catalyses the reaction D-sedoheptulose 7-phosphate = 2-epi-5-epi-valiolone + phosphate. Its function is as follows. Catalyzes the cyclization of D-sedoheptulose 7-phosphate to 2-epi-5-epi-valiolone. Involved in salbostatin biosynthesis. The sequence is that of 2-epi-5-epi-valiolone synthase from Streptomyces albus (strain ATCC 21838 / DSM 41398 / FERM P-419 / JCM 4703 / NBRC 107858).